We begin with the raw amino-acid sequence, 433 residues long: Arrestin domain-containing protein 1 (433 aa).

2 disordered regions span residues 296–322 and 349–372; these read GLGL…AEAA and LSSV…PLHP. Over residues 301–312 the composition is skewed to pro residues; it reads PGAPPLVVPSAP. Short sequence motifs (PPxY motif) lie at residues 402–405 and 415–418; these read PPEY and PPSY.

Belongs to the arrestin family. As to quaternary structure, interacts (via PPxY motifs) with ITCH (via WW domains); the interaction is direct and participates in the recruitment of the ubiquitin-protein ligase ITCH to the NOTCH1 receptor. Interacts with ARRB1 and ARRB2; the interaction is direct. Interacts with TSG101; may recruit TSG101 to the plasma membrane. Interacts (via PPxY motifs) with WWP2 (via WW domains); ubiquitinates ARRDC1. Interacts with SLC11A2; controls the incorporation of SLC11A2 into extracellular vesicles through an ubiquitination-dependent mechanism. Interacts with WWP1 (via WW domains). Interacts with NEDD4 (via WW domains). Interacts with PDCD6IP. In terms of processing, ubiquitinated. Ubiquitination by WWP2; promotes localization to extracellular microvesicles. Ubiquitinated by WWP1.

Its subcellular location is the cell membrane. Functions as an adapter recruiting ubiquitin-protein ligases to their specific substrates. Through an ubiquitination-dependent mechanism plays for instance a role in the incorporation of SLC11A2 into extracellular vesicles. More generally, plays a role in the extracellular transport of proteins between cells through the release in the extracellular space of microvesicles. By participating in the ITCH-mediated ubiquitination and subsequent degradation of NOTCH1, negatively regulates the NOTCH signaling pathway. The chain is Arrestin domain-containing protein 1 from Homo sapiens (Human).